A 460-amino-acid chain; its full sequence is Muscarinic acetylcholine receptor M1 (460 aa).

The Extracellular portion of the chain corresponds to 1–22 (MNTSAPPAVSPNITVLAPGKGP). N-linked (GlcNAc...) asparagine glycosylation is found at Asn2 and Asn12. Residues 23–48 (WQVAFIGITTGLLSLATVTGNLLVLI) traverse the membrane as a helical segment. At 49 to 62 (SFKVNTELKTVNNY) the chain is on the cytoplasmic side. A helical transmembrane segment spans residues 63-84 (FLLSLACADLIIGTFSMNLYTT). Residues 85-95 (YLLMGHWALGT) lie on the Extracellular side of the membrane. The chain crosses the membrane as a helical span at residues 96–121 (LACDLWLALDYVASNASVMNLLLISF). Cysteines 98 and 178 form a disulfide. Residues 122–142 (DRYFSVTRPLSYRAKRTPRRA) are Cytoplasmic-facing. A helical membrane pass occupies residues 143–164 (ALMIGLAWLVSFVLWAPAILFW). Residues 165–185 (QYLVGERTVLAGQCYIQFLSQ) lie on the Extracellular side of the membrane. The chain crosses the membrane as a helical span at residues 186–209 (PIITFGTAMAAFYLPVTVMCTLYW). Topologically, residues 210-366 (RIYRETENRA…LVKEKKAART (157 aa)) are cytoplasmic. Disordered stretches follow at residues 225–256 (LQGS…ETPP), 274–296 (WKEE…GEEP), and 310–351 (EAQA…QLAK). Phosphothreonine is present on Thr230. Residues 238–247 (SSSSERSQPG) are compositionally biased toward low complexity. Residues 328 to 343 (RPTRKGRERAGKGQKP) show a composition bias toward basic residues. A helical membrane pass occupies residues 367-390 (LSAILLAFIVTWTPYNIMVLVSTF). The Extracellular portion of the chain corresponds to 391–397 (CKDCVPE). The chain crosses the membrane as a helical span at residues 398 to 420 (TLWELGYWLCYVNSTINPMCYAL). Topologically, residues 421-460 (CNKAFRDTFRLLLLCRWDKRRWRKIPKRPGSVHRTPSRQC) are cytoplasmic. Thr428 is subject to Phosphothreonine. Ser451 carries the post-translational modification Phosphoserine. Thr455 carries the phosphothreonine modification. Ser457 bears the Phosphoserine mark.

It belongs to the G-protein coupled receptor 1 family. Muscarinic acetylcholine receptor subfamily. CHRM1 sub-subfamily. As to quaternary structure, interacts with GPRASP2. Interacts with TMEM147.

It localises to the cell membrane. It is found in the postsynaptic cell membrane. The muscarinic acetylcholine receptor mediates various cellular responses, including inhibition of adenylate cyclase, breakdown of phosphoinositides and modulation of potassium channels through the action of G proteins. Primary transducing effect is Pi turnover. This Sus scrofa (Pig) protein is Muscarinic acetylcholine receptor M1 (CHRM1).